The following is a 475-amino-acid chain: Ribulose bisphosphate carboxylase large chain (475 aa).

The propeptide occupies 1 to 2; that stretch reads MS. Pro3 bears the N-acetylproline mark. Lys14 carries the N6,N6,N6-trimethyllysine modification. Lys175 (proton acceptor) is an active-site residue. The D-ribulose 1,5-bisphosphate site is built by Lys175 and Lys177. Residues Lys201, Asp203, and Glu204 each coordinate Mg(2+). Lys201 carries the N6-carboxylysine modification. Glu204 contacts D-ribulose 1,5-bisphosphate. His294 (proton acceptor) is an active-site residue. Arg295, His327, Lys334, Ser379, Gly381, Gly403, and Gly404 together coordinate D-ribulose 1,5-bisphosphate.

It belongs to the RuBisCO large chain family. Type I subfamily. In terms of assembly, heterohexadecamer of 8 large chains and 8 small chains. Heterohexadecamer; disulfide-linked. The disulfide link is formed within the large subunit homodimers. It depends on Mg(2+) as a cofactor. Post-translationally, the disulfide bond which can form in the large chain dimeric partners within the hexadecamer appears to be associated with oxidative stress and protein turnover.

The protein localises to the plastid. The protein resides in the chloroplast. The enzyme catalyses 2 (2R)-3-phosphoglycerate + 2 H(+) = D-ribulose 1,5-bisphosphate + CO2 + H2O. It carries out the reaction D-ribulose 1,5-bisphosphate + O2 = 2-phosphoglycolate + (2R)-3-phosphoglycerate + 2 H(+). Its function is as follows. RuBisCO catalyzes two reactions: the carboxylation of D-ribulose 1,5-bisphosphate, the primary event in carbon dioxide fixation, as well as the oxidative fragmentation of the pentose substrate in the photorespiration process. Both reactions occur simultaneously and in competition at the same active site. Binds to abscisic acid (ABA); only half of the possible binding sites are occupied in the crystal and there are indications this is a low affinity site. The polypeptide is Ribulose bisphosphate carboxylase large chain (Pisum sativum (Garden pea)).